The primary structure comprises 57 residues: Myrmicitoxin(1)-Pm7a (57 aa).

The N-terminal stretch at 1–23 (MMKIIYAFLLIAVVAFMGSGIMA) is a signal peptide. The propeptide occupies 24 to 31 (EPLAEAIA).

It belongs to the formicidae venom clade 4 family. As to expression, expressed by the venom gland.

The protein resides in the secreted. Its function is as follows. Probable neurotoxin. This Pogonomyrmex maricopa (Maricopa harvester ant) protein is Myrmicitoxin(1)-Pm7a.